The chain runs to 420 residues: MAPK/MAK/MRK overlapping kinase (420 aa).

One can recognise a Protein kinase domain in the interval 4 to 285 (YKAIGKIGEG…AHQALQHPYF (282 aa)). ATP contacts are provided by residues 10-18 (IGEGTFSEV) and Lys33. Residue Asp128 is the Proton acceptor of the active site. Residues 311–322 (PESSSHNWSFSQ) are compositionally biased toward polar residues. The disordered stretch occupies residues 311–344 (PESSSHNWSFSQEGRKQKQSLRHEEGHARRQGPT). Residues 323–338 (EGRKQKQSLRHEEGHA) are compositionally biased toward basic and acidic residues.

Belongs to the protein kinase superfamily. CMGC Ser/Thr protein kinase family. CDC2/CDKX subfamily. Mg(2+) is required as a cofactor. Post-translationally, autophosphorylated. In terms of tissue distribution, highly expressed in testis, and less in kidney, brain and lung.

Its subcellular location is the cytoplasm. The protein resides in the cell projection. It localises to the cilium. It is found in the nucleus. The enzyme catalyses L-seryl-[protein] + ATP = O-phospho-L-seryl-[protein] + ADP + H(+). It catalyses the reaction L-threonyl-[protein] + ATP = O-phospho-L-threonyl-[protein] + ADP + H(+). Its activity is regulated as follows. Phosphorylation appears to increase the enzymatic activity. Functionally, able to phosphorylate several exogenous substrates and to undergo autophosphorylation. Negatively regulates cilium length in a cAMP and mTORC1 signaling-dependent manner. This chain is MAPK/MAK/MRK overlapping kinase (Mok), found in Mus musculus (Mouse).